The chain runs to 169 residues: U3 small nucleolar ribonucleoprotein protein imp3 (169 aa).

An S4 RNA-binding domain is found at 109–166; that stretch reads RRLPVVMCRLKMCETVSTSVKYVEHGHVRVGPEVITDPAFFVTRNMEDFVTWVDSSKI.

Belongs to the universal ribosomal protein uS4 family. Component of a heterotrimeric complex containing imp3, imp4 and mpp10.

It is found in the nucleus. It localises to the nucleolus. Functionally, component of the U3 small nucleolar ribonucleoprotein. Required for the early cleavages at sites A0, A1 and A2 during 18S ribosomal pre-RNA processing. The sequence is that of U3 small nucleolar ribonucleoprotein protein imp3 (RBP) from Pneumocystis carinii.